A 479-amino-acid polypeptide reads, in one-letter code: RAC-gamma serine/threonine-protein kinase (479 aa).

S2 carries the post-translational modification N-acetylserine. Positions 5–107 (TIVKEGWVQK…WTEAIQAVAD (103 aa)) constitute a PH domain. An intrachain disulfide couples C59 to C76. The Protein kinase domain maps to 148 to 405 (FDYLKLLGKG…AKEIMRHSFF (258 aa)). ATP contacts are provided by residues 154–162 (LGKGTFGKV) and K177. D271 functions as the Proton acceptor in the catalytic mechanism. Cysteines 293 and 307 form a disulfide. T302 carries O-linked (GlcNAc) threonine glycosylation. A Phosphothreonine; by PDPK1 modification is found at T305. Residue T309 is glycosylated (O-linked (GlcNAc) threonine). Residues 406–479 (SGVNWQDVYD…QFSYSASGRE (74 aa)) form the AGC-kinase C-terminal domain. A Phosphothreonine modification is found at T447. The tract at residues 458–479 (DCMDNERRPHFPQFSYSASGRE) is disordered. A Phosphoserine; by PKC/PRKCZ modification is found at S472. S472 carries O-linked (GlcNAc) serine; alternate glycosylation.

This sequence belongs to the protein kinase superfamily. AGC Ser/Thr protein kinase family. RAC subfamily. In terms of assembly, interacts (via PH domain) with TCL1A; this enhances AKT3 phosphorylation and activation. Interacts with TRAF6. Interacts with KCTD20. Interacts with BTBD10. In terms of processing, phosphorylation on Thr-305 and Ser-472 is required for full activity. Phosphorylation of the activation loop at Thr-305 by PDPK1/PDK1 is a prerequisite for full activation. Phosphorylation at Ser-472 by mTORC2 in response to growth factors plays a key role in AKT1 activation by facilitating subsequent phosphorylation of the activation loop by PDPK1/PDK1. Ubiquitinated. When fully phosphorylated and translocated into the nucleus, undergoes 'Lys-48'-polyubiquitination catalyzed by TTC3, leading to its degradation by the proteasome. Post-translationally, O-GlcNAcylation at Thr-302 and Thr-309 inhibits activating phosphorylation at Thr-305 via disrupting the interaction between AKT and PDPK1/PDK1. As to expression, in adult tissues, it is highly expressed in brain, lung and kidney, but weakly in heart, testis and liver. In fetal tissues, it is highly expressed in heart, liver and brain and not at all in kidney.

The protein localises to the nucleus. The protein resides in the cytoplasm. It localises to the membrane. The enzyme catalyses L-seryl-[protein] + ATP = O-phospho-L-seryl-[protein] + ADP + H(+). The catalysed reaction is L-threonyl-[protein] + ATP = O-phospho-L-threonyl-[protein] + ADP + H(+). With respect to regulation, two specific sites, one in the kinase domain (Thr-305) and the other in the C-terminal regulatory region (Ser-472), need to be phosphorylated for its full activation. IGF-1 leads to the activation of AKT3, which may play a role in regulating cell survival. AKT3 is one of 3 closely related serine/threonine-protein kinases (AKT1, AKT2 and AKT3) called the AKT kinase, and which regulate many processes including metabolism, proliferation, cell survival, growth and angiogenesis. This is mediated through serine and/or threonine phosphorylation of a range of downstream substrates. Over 100 substrate candidates have been reported so far, but for most of them, no isoform specificity has been reported. AKT3 is the least studied AKT isoform. It plays an important role in brain development and is crucial for the viability of malignant glioma cells. AKT3 isoform may also be the key molecule in up-regulation and down-regulation of MMP13 via IL13. Required for the coordination of mitochondrial biogenesis with growth factor-induced increases in cellular energy demands. Down-regulation by RNA interference reduces the expression of the phosphorylated form of BAD, resulting in the induction of caspase-dependent apoptosis. In Homo sapiens (Human), this protein is RAC-gamma serine/threonine-protein kinase (AKT3).